Reading from the N-terminus, the 240-residue chain is Sugar fermentation stimulation protein homolog (240 aa).

This sequence belongs to the SfsA family.

The sequence is that of Sugar fermentation stimulation protein homolog from Methanothermobacter thermautotrophicus (strain ATCC 29096 / DSM 1053 / JCM 10044 / NBRC 100330 / Delta H) (Methanobacterium thermoautotrophicum).